The sequence spans 278 residues: Protein canopy homolog 3 (278 aa).

An N-terminal signal peptide occupies residues 1–30 (MDSMPEPASRCLLLLPLLLLLLLLLPAPEL). The Saposin B-type domain occupies 47–271 (SKCEVCKYVA…EGIQKASPLT (225 aa)). 3 disulfides stabilise this stretch: cysteine 49-cysteine 206, cysteine 52-cysteine 194, and cysteine 104-cysteine 166. Asparagine 153 carries an N-linked (GlcNAc...) asparagine glycan. Positions 153 to 179 (NETSAEVADLKKQCDVLVEEFEEVIED) form a coiled coil. The segment at 215 to 278 (KGDTAALGGK…PLTHSPPDEL (64 aa)) is disordered. The span at 233-243 (AKAAGGRSSSS) shows a compositional bias: low complexity.

This sequence belongs to the canopy family. Interacts with HSP90B1; this interaction is disrupted in the presence of ATP. Interacts with TLR1, TLR2, TLR4 and TLR9. Strongest interaction with TLR4.

The protein localises to the endoplasmic reticulum. Toll-like receptor (TLR)-specific co-chaperone for HSP90B1. Required for proper TLR folding, except that of TLR3, and hence controls TLR exit from the endoplasmic reticulum. Consequently, required for both innate and adaptive immune responses. This Homo sapiens (Human) protein is Protein canopy homolog 3 (CNPY3).